A 317-amino-acid chain; its full sequence is Ribose-phosphate pyrophosphokinase (317 aa).

ATP-binding positions include Asp43–Glu45 and Arg102–Gln103. Positions 136 and 175 each coordinate Mg(2+). The active site involves Lys198. Residues Arg200, Asp224, and Asp228–Thr232 each bind D-ribose 5-phosphate.

This sequence belongs to the ribose-phosphate pyrophosphokinase family. Class I subfamily. In terms of assembly, homohexamer. It depends on Mg(2+) as a cofactor.

The protein localises to the cytoplasm. It carries out the reaction D-ribose 5-phosphate + ATP = 5-phospho-alpha-D-ribose 1-diphosphate + AMP + H(+). Its pathway is metabolic intermediate biosynthesis; 5-phospho-alpha-D-ribose 1-diphosphate biosynthesis; 5-phospho-alpha-D-ribose 1-diphosphate from D-ribose 5-phosphate (route I): step 1/1. Involved in the biosynthesis of the central metabolite phospho-alpha-D-ribosyl-1-pyrophosphate (PRPP) via the transfer of pyrophosphoryl group from ATP to 1-hydroxyl of ribose-5-phosphate (Rib-5-P). The protein is Ribose-phosphate pyrophosphokinase of Oceanobacillus iheyensis (strain DSM 14371 / CIP 107618 / JCM 11309 / KCTC 3954 / HTE831).